The chain runs to 322 residues: Extracellular metalloprotease AFUA_1G07730 (322 aa).

Residues 1-22 (MLPFNSCVYVLLIISLMSNCRA) form the signal peptide. Residues N123 and N197 are each glycosylated (N-linked (GlcNAc...) asparagine). Residue H233 coordinates Zn(2+). E234 is a catalytic residue. H237 is a binding site for Zn(2+). A disulfide bridge links C272 with C299.

Belongs to the peptidase M43B family.

Its subcellular location is the secreted. Secreted metalloproteinase that allows assimilation of proteinaceous substrates. Plays a pivotal role as a pathogenicity determinant during infections and contributes to the ability of the pathogen to persist within the mammalian host. This chain is Extracellular metalloprotease AFUA_1G07730, found in Aspergillus fumigatus (strain ATCC MYA-4609 / CBS 101355 / FGSC A1100 / Af293) (Neosartorya fumigata).